We begin with the raw amino-acid sequence, 89 residues long: Mu-theraphotoxin-Phlo1a (89 aa).

An N-terminal signal peptide occupies residues 1–22; it reads MKVSVLITLAVLGVMFVWTSAA. A propeptide spanning residues 23-52 is cleaved from the precursor; sequence EQEDHGSDRRDSPALLKNLLGEEVFQSEER. Intrachain disulfides connect C54–C68, C61–C73, and C67–C81. At I87 the chain carries Isoleucine amide.

It belongs to the neurotoxin 10 (Hwtx-1) family. 39 (Jztx-34) subfamily. As to expression, expressed by the venom gland.

It localises to the secreted. Functionally, gating-modifier toxin that inhibits voltage-gated sodium channel Nav by shifting the threshold for channel activation to more positive potentials. This toxin moderately inhibits human Nav1.7/SCN9A (IC(50)=459 nM) and weakly inhibits hNav1.2/SCN2A and hNav1.5/SCN5A (&lt;20% inhibition at 1 uM peptide). Inhibition of Nav1.7 is voltage-dependent, with lower inhibition at more positive test pulses. This is Mu-theraphotoxin-Phlo1a from Phlogius sp. (Tarantula spider).